The primary structure comprises 162 residues: MFDIGFSELILIFVVGLVVLGPQRLPVAIRTVMGWVRTIRSLATNVQHELAQELKLQELQESIKKAEAMNLTTLSPELTQTVEDLKQSAQKMQNDLNNANQIGKLTDEQVADIQQNIANAQPSEITEANELDESKLTAYYPPDDDLVSPSTTKLEQDKQNVN.

Residues 1–21 (MFDIGFSELILIFVVGLVVLG) form a helical membrane-spanning segment. A disordered region spans residues 136–162 (LTAYYPPDDDLVSPSTTKLEQDKQNVN).

This sequence belongs to the TatB family. As to quaternary structure, the Tat system comprises two distinct complexes: a TatABC complex, containing multiple copies of TatA, TatB and TatC subunits, and a separate TatA complex, containing only TatA subunits. Substrates initially bind to the TatABC complex, which probably triggers association of the separate TatA complex to form the active translocon.

The protein resides in the cell inner membrane. Its function is as follows. Part of the twin-arginine translocation (Tat) system that transports large folded proteins containing a characteristic twin-arginine motif in their signal peptide across membranes. Together with TatC, TatB is part of a receptor directly interacting with Tat signal peptides. TatB may form an oligomeric binding site that transiently accommodates folded Tat precursor proteins before their translocation. The protein is Sec-independent protein translocase protein TatB of Haemophilus ducreyi (strain 35000HP / ATCC 700724).